Here is a 628-residue protein sequence, read N- to C-terminus: Alpha-L-arabinofuranosidase A (628 aa).

The first 25 residues, 1–25 (MVAFSALSGVSAVSLLLSLVQNAHG), serve as a signal peptide directing secretion. N-linked (GlcNAc...) asparagine glycosylation is found at N36, N51, N74, N152, N171, N260, N359, N440, N493, and N610.

This sequence belongs to the glycosyl hydrolase 51 family.

It catalyses the reaction Hydrolysis of terminal non-reducing alpha-L-arabinofuranoside residues in alpha-L-arabinosides.. It participates in glycan metabolism; L-arabinan degradation. Its function is as follows. Acts only on small linear 1,5-alpha-linked L-arabinofuranosyl oligosaccharides. The protein is Alpha-L-arabinofuranosidase A (abfA) of Aspergillus niger.